The following is a 363-amino-acid chain: S-adenosylmethionine:tRNA ribosyltransferase-isomerase (363 aa).

The protein belongs to the QueA family. In terms of assembly, monomer.

The protein localises to the cytoplasm. The catalysed reaction is 7-aminomethyl-7-carbaguanosine(34) in tRNA + S-adenosyl-L-methionine = epoxyqueuosine(34) in tRNA + adenine + L-methionine + 2 H(+). It functions in the pathway tRNA modification; tRNA-queuosine biosynthesis. Functionally, transfers and isomerizes the ribose moiety from AdoMet to the 7-aminomethyl group of 7-deazaguanine (preQ1-tRNA) to give epoxyqueuosine (oQ-tRNA). The sequence is that of S-adenosylmethionine:tRNA ribosyltransferase-isomerase from Haemophilus influenzae (strain PittGG).